The following is a 28-amino-acid chain: Probable small spore coat assembly protein B (28 aa).

The helical transmembrane segment at 4 to 24 (VFAGGFALLVVLFILLIIIGA) threads the bilayer.

This sequence belongs to the SscA family.

It is found in the membrane. In Bacillus subtilis (strain 168), this protein is Probable small spore coat assembly protein B.